Reading from the N-terminus, the 156-residue chain is Small ribosomal subunit protein uS7 (156 aa).

It belongs to the universal ribosomal protein uS7 family. Part of the 30S ribosomal subunit. Contacts proteins S9 and S11.

Its function is as follows. One of the primary rRNA binding proteins, it binds directly to 16S rRNA where it nucleates assembly of the head domain of the 30S subunit. Is located at the subunit interface close to the decoding center, probably blocks exit of the E-site tRNA. This is Small ribosomal subunit protein uS7 from Bartonella quintana (strain Toulouse) (Rochalimaea quintana).